The primary structure comprises 293 residues: Ribosomal protein L11 methyltransferase (293 aa).

S-adenosyl-L-methionine is bound by residues Thr145, Gly166, Asp188, and Asn230.

The protein belongs to the methyltransferase superfamily. PrmA family.

Its subcellular location is the cytoplasm. It catalyses the reaction L-lysyl-[protein] + 3 S-adenosyl-L-methionine = N(6),N(6),N(6)-trimethyl-L-lysyl-[protein] + 3 S-adenosyl-L-homocysteine + 3 H(+). In terms of biological role, methylates ribosomal protein L11. The polypeptide is Ribosomal protein L11 methyltransferase (Serratia proteamaculans (strain 568)).